Here is a 334-residue protein sequence, read N- to C-terminus: ADP-L-glycero-D-manno-heptose-6-epimerase (334 aa).

Residues 11 to 12, 32 to 33, Lys-39, Lys-54, 77 to 81, and Asn-94 contribute to the NADP(+) site; these read FI, DN, and QGACS. Catalysis depends on Tyr-141, which acts as the Proton acceptor. Residue Lys-145 coordinates NADP(+). Residue Asn-171 coordinates substrate. The NADP(+) site is built by Val-172 and Lys-180. The active-site Proton acceptor is the Lys-180. Substrate contacts are provided by residues Arg-182, His-189, 203–206, Arg-216, and Tyr-295; that span reads FGSN.

The protein belongs to the NAD(P)-dependent epimerase/dehydratase family. HldD subfamily. Homopentamer. Requires NADP(+) as cofactor.

The enzyme catalyses ADP-D-glycero-beta-D-manno-heptose = ADP-L-glycero-beta-D-manno-heptose. It participates in nucleotide-sugar biosynthesis; ADP-L-glycero-beta-D-manno-heptose biosynthesis; ADP-L-glycero-beta-D-manno-heptose from D-glycero-beta-D-manno-heptose 7-phosphate: step 4/4. It functions in the pathway bacterial outer membrane biogenesis; LOS core biosynthesis. Functionally, catalyzes the interconversion between ADP-D-glycero-beta-D-manno-heptose and ADP-L-glycero-beta-D-manno-heptose via an epimerization at carbon 6 of the heptose. This chain is ADP-L-glycero-D-manno-heptose-6-epimerase, found in Neisseria meningitidis serogroup B (strain ATCC BAA-335 / MC58).